An 84-amino-acid chain; its full sequence is Toxin To10 (84 aa).

Positions 1 to 19 (MNYSTLIAVASLLTAGTES) are cleaved as a signal peptide. An LCN-type CS-alpha/beta domain is found at 21–80 (KDGYPVEGSCAFPCGYDNAYCDKLCKERKADSGYCYWVNILCYCYGLPDNAAIKGYGRCK). Intrachain disulfides connect cysteine 30-cysteine 79, cysteine 34-cysteine 55, cysteine 41-cysteine 62, and cysteine 45-cysteine 64. Proline 81 bears the Proline amide mark.

It belongs to the long (4 C-C) scorpion toxin superfamily. Sodium channel inhibitor family. Alpha subfamily. Expressed by the venom gland.

The protein resides in the secreted. Functionally, alpha toxins bind voltage-independently at site-3 of sodium channels (Nav) and inhibit the inactivation of the activated channels, thereby blocking neuronal transmission. This Tityus obscurus (Amazonian scorpion) protein is Toxin To10.